Here is a 77-residue protein sequence, read N- to C-terminus: Acyl carrier protein (77 aa).

Residues 2–77 form the Carrier domain; the sequence is SNIEERVKKI…AAIDYVTANQ (76 aa). Ser37 is modified (O-(pantetheine 4'-phosphoryl)serine).

Belongs to the acyl carrier protein (ACP) family. 4'-phosphopantetheine is transferred from CoA to a specific serine of apo-ACP by AcpS. This modification is essential for activity because fatty acids are bound in thioester linkage to the sulfhydryl of the prosthetic group.

Its subcellular location is the cytoplasm. It participates in lipid metabolism; fatty acid biosynthesis. Carrier of the growing fatty acid chain in fatty acid biosynthesis. The protein is Acyl carrier protein of Colwellia psychrerythraea (strain 34H / ATCC BAA-681) (Vibrio psychroerythus).